The chain runs to 282 residues: sn-glycerol-3-phosphate transport system permease protein UgpE (282 aa).

6 helical membrane passes run 14 to 34 (LMLI…FVAS), 86 to 106 (IAIA…IVFF), 112 to 132 (MAFF…RILP), 136 to 156 (VIVD…LMAS), 201 to 221 (IAAL…WPLL), and 248 to 268 (WNYV…VVVL). The ABC transmembrane type-1 domain maps to 78–269 (LFNTFVVAIA…IPPVAVVVLM (192 aa)).

The protein belongs to the binding-protein-dependent transport system permease family. The complex is composed of two ATP-binding proteins (UgpC), two transmembrane proteins (UgpA and UgpE) and a solute-binding protein (UgpB).

It is found in the cell inner membrane. Functionally, part of the ABC transporter complex UgpBAEC involved in sn-glycerol-3-phosphate (G3P) import. Probably responsible for the translocation of the substrate across the membrane. This chain is sn-glycerol-3-phosphate transport system permease protein UgpE (ugpE), found in Rhizobium meliloti (strain 1021) (Ensifer meliloti).